Consider the following 331-residue polypeptide: MKKPVVIGLAIAAIVAVIAGGTWWYQSRQDDGLTLYGNVDIRTVNISFRVGGRLASLNVDEGDTIKAGQVLGELDHAPYENALMQAKAGVSVAQAQYDLMLAGYRDEEIAQAAAAVRQAQAAYDYAQNFYNRQQGLWKSRTISANDLENARSSRDQAQATLKSAQDKLSQYRTGNREQDIAQAKASLEQAKAQLAQAQLDLQDTTLIAPANGTLLTRAVEPGSMLNAGSTVLTLSLTRPVWVRAYVDERNLSQTQPGRDILLYTDGRPDKPYHGKIGFVSPTAEFTPKTVETPDLRTDLVYRLRIIVTDADDALRQGMPVTVKFNDEARHE.

The first 19 residues, M1–A19, serve as a signal peptide directing secretion. Residues E107–A208 adopt a coiled-coil conformation.

It belongs to the UPF0194 family.

The protein resides in the periplasm. In Salmonella agona (strain SL483), this protein is UPF0194 membrane protein YbhG.